A 130-amino-acid polypeptide reads, in one-letter code: Small ribosomal subunit protein uS9 (130 aa).

Belongs to the universal ribosomal protein uS9 family.

This chain is Small ribosomal subunit protein uS9, found in Aeromonas salmonicida (strain A449).